Consider the following 526-residue polypeptide: Bifunctional purine biosynthesis protein PurH (526 aa).

Residues 1-145 (MSKAPLALLS…KNHAHVGIVT (145 aa)) enclose the MGS-like domain.

Belongs to the PurH family.

The catalysed reaction is (6R)-10-formyltetrahydrofolate + 5-amino-1-(5-phospho-beta-D-ribosyl)imidazole-4-carboxamide = 5-formamido-1-(5-phospho-D-ribosyl)imidazole-4-carboxamide + (6S)-5,6,7,8-tetrahydrofolate. It carries out the reaction IMP + H2O = 5-formamido-1-(5-phospho-D-ribosyl)imidazole-4-carboxamide. The protein operates within purine metabolism; IMP biosynthesis via de novo pathway; 5-formamido-1-(5-phospho-D-ribosyl)imidazole-4-carboxamide from 5-amino-1-(5-phospho-D-ribosyl)imidazole-4-carboxamide (10-formyl THF route): step 1/1. Its pathway is purine metabolism; IMP biosynthesis via de novo pathway; IMP from 5-formamido-1-(5-phospho-D-ribosyl)imidazole-4-carboxamide: step 1/1. This is Bifunctional purine biosynthesis protein PurH from Psychrobacter cryohalolentis (strain ATCC BAA-1226 / DSM 17306 / VKM B-2378 / K5).